The following is a 414-amino-acid chain: MKNNILEELKWRGLIKQVTNEQKILDAQNSNDAVYCGFDPTADSLHVGHLMMIITLKRFALQGFKPIALIGGATGMIGDPSFKASERVLQTKQQVDHNINKISTQLKEIIPTVSFVNNRDWLEDISLIDFLRDIGKHFNLSYLLAKESIATRIQTGLSVTEFCYTMLQAFDFYYLYKNNDCSVQIGGSDQWGNITSGIDFISDTINKNNKASGVTINLLTKSDGQKFGKTESGAVWLDKTKTSEYEFYQFWFNQTDEDSINLLKCLTFLTKDQIEQLIKQHNQQPAKHFLQKALASEMTKFVHQQQGLDKALKLTEAFFSGDLFSLTDDLFKMALNSLPNTQINKDTKVIDALVELKVASSKREAREFLKNKAILINNQVIEDENLVISSFDLIQNKYLLVKKGKKKYFVILVK.

Tyrosine 35 contacts L-tyrosine. The 'HIGH' region motif lies at 40–49 (PTADSLHVGH). Residues tyrosine 164 and glutamine 168 each contribute to the L-tyrosine site. Residues 226 to 230 (KFGKT) carry the 'KMSKS' region motif. Lysine 229 contacts ATP. The S4 RNA-binding domain maps to 347 to 414 (TKVIDALVEL…KKKYFVILVK (68 aa)).

It belongs to the class-I aminoacyl-tRNA synthetase family. TyrS type 1 subfamily. Homodimer.

It is found in the cytoplasm. The catalysed reaction is tRNA(Tyr) + L-tyrosine + ATP = L-tyrosyl-tRNA(Tyr) + AMP + diphosphate + H(+). Catalyzes the attachment of tyrosine to tRNA(Tyr) in a two-step reaction: tyrosine is first activated by ATP to form Tyr-AMP and then transferred to the acceptor end of tRNA(Tyr). This chain is Tyrosine--tRNA ligase, found in Mycoplasma capricolum subsp. capricolum (strain California kid / ATCC 27343 / NCTC 10154).